The following is a 340-amino-acid chain: Sulfotransferase ppzF (340 aa).

It functions in the pathway secondary metabolite biosynthesis. Its function is as follows. Sulfotransferase; part of the gene cluster that mediates the biosynthesis of pyrrolopyrazines, secondary metabolites showing insecticidal activity. The role of ppzF within the pathway has still to be determined. The single multifunctional NRPS ppzA is sufficient to produce peramine via condensation of 1-pyrroline-5-carboxylate and arginine, N-methylation of the alpha-amino group of arginine and reduction of the thioester and the cyclization to form an iminium ion resulting in release from the peptide synthetase. Deprotonation of this intermediate and oxidation of the pyrroline ring would give rise to peramine. In Epichloe species that produce only peramine, the peramine synthetase gene is not localized in a gene cluster, in contrast to Metarhizium species that contain additional pyrrolopyrazine biosynthesis genes. The 2-oxoglutarate-Fe(II) type oxidoreductase ppzC hydroxylates peramine to yield the newly identified compound 8-hydroxyperamine whereas ppzD converts L-proline into trans-4-hydroxy-L-proline, a precursor of peramine biosynthesis. The protein is Sulfotransferase ppzF of Metarhizium majus (strain ARSEF 297).